The chain runs to 1067 residues: Protein bric-a-brac 2 (1067 aa).

The interval 30–121 (MAPPEEPKMV…PPRPLTSSEV (92 aa)) is disordered. Composition is skewed to basic and acidic residues over residues 47–62 (HLED…REVE) and 86–98 (KSPE…ELVK). Y55 bears the Phosphotyrosine mark. 3 positions are modified to phosphoserine: S56, S87, and S147. A BTB domain is found at 223–288 (VDVTLSCEGH…MYKGEINVCQ (66 aa)). 3 disordered regions span residues 312–412 (GRGE…QSQP), 444–505 (ANQR…AAQH), and 525–563 (GAAG…SHHD). The span at 326-335 (FDDEDEEEEL) shows a compositional bias: acidic residues. A Phosphoserine modification is found at S377. T384 is subject to Phosphothreonine. The segment covering 391–412 (GGESEISERGSSGTPGQSQSQP) has biased composition (low complexity). 2 stretches are compositionally biased toward gly residues: residues 525 to 538 (GAAG…GSGS) and 545 to 556 (GGTGVAGSGAGA). In terms of domain architecture, HTH psq-type spans 635–687 (FRERGPLKSWRPEAMAEAIFSVLKEGLSLSQAARKFDIPYPTFVLYANRVHNM). The H-T-H motif DNA-binding region spans 645–690 (RPEAMAEAIFSVLKEGLSLSQAARKFDIPYPTFVLYANRVHNMLGP). The a.T hook DNA-binding region spans 697–708 (DPRPKARGRPQR). Disordered stretches follow at residues 796–829 (QILS…PHAQ), 860–879 (AKHQ…PDLS), and 891–967 (VMPS…PYSA). The span at 812–829 (AHHQQQPSHHQQQSPHAQ) shows a compositional bias: low complexity. The segment covering 904–914 (AAPNSAASYAR) has biased composition (low complexity). Over residues 915–933 (ELSRERERDRERERERELS) the composition is skewed to basic and acidic residues. The segment covering 934–949 (RQYGSQSRGSSSGSGS) has biased composition (low complexity).

In terms of tissue distribution, leg imaginal disk at the central region of the tarsus and in eye antenna disk at the basal cylinder.

The protein localises to the nucleus. Functionally, probably acts as a transcriptional regulator. Required for the specification of the tarsal segment. Also involved in antenna development. The polypeptide is Protein bric-a-brac 2 (bab2) (Drosophila melanogaster (Fruit fly)).